The sequence spans 140 residues: Protein ripply1 (140 aa).

The WRPW motif; required for gro2-binding signature appears at 28–31 (WRPW). A ripply homology domain region spans residues 71–106 (HPVRLYWPRSKSFDYLFSDGEALLRNFPVQATINFY). Residues 107–126 (DESDSEDEEESCDEDDESDV) form a disordered region.

It belongs to the ripply family. As to quaternary structure, interacts with gro2 via the WRPW motif. Expressed in the embryonic anterior presomitic mesoderm and in newly formed somites.

The protein resides in the nucleus. Plays a role in somitogenesis. Essential for transcriptional repression of the segmental patterning genes, thus terminating the segmentation program in the presomitic mesoderm, and also required for the maintenance of rostrocaudal polarity in somites. In Danio rerio (Zebrafish), this protein is Protein ripply1.